We begin with the raw amino-acid sequence, 111 residues long: Disintegrin Eo1 subunit 1 (111 aa).

The signal sequence occupies residues 1–20 (MIQVLLVIICLAVFPYQGSS). Positions 21 to 46 (IILESGNVNDFELVYPKKVTVLPTGA) are excised as a propeptide. Residues 26–111 (GNVNDFELVY…SDCPRNPWKD (86 aa)) enclose the Disintegrin domain. Cystine bridges form between C53-C76, C67-C73, C72-C97, and C85-C104. A Cell attachment site; atypical (WGD) motif is present at residues 89-91 (WGD). Residues 110 to 111 (KD) constitute a propeptide that is removed on maturation.

It belongs to the disintegrin family. Dimeric disintegrin subfamily. In terms of assembly, heterodimer; disulfide-linked. In terms of tissue distribution, expressed by the venom gland.

Its subcellular location is the secreted. Its function is as follows. Poor inhibitor of platelet aggregation. The disintegrin inhibits the adhesion of cells expressing the RGD-dependent integrin alpha-5/beta-1 (ITGA5/ITGB1) to immobilized fibronectin. Inhibition on alpha-IIb/beta-3 (ITGA2B/ITGB3) is low. In Echis ocellatus (Ocellated saw-scaled viper), this protein is Disintegrin Eo1 subunit 1.